The following is a 74-amino-acid chain: Mitochondrial import receptor subunit TOM6 homolog (74 aa).

The segment covering 1 to 20 has biased composition (low complexity); the sequence is MASSGVTVSAAGSASEASEV. The tract at residues 1 to 21 is disordered; sequence MASSGVTVSAAGSASEASEVP. The residue at position 2 (Ala2) is an N-acetylalanine.

It belongs to the Tom6 family. As to quaternary structure, forms part of the preprotein translocase complex of the outer mitochondrial membrane (TOM complex) which consists of at least 7 different proteins (TOMM5, TOMM6, TOMM7, TOMM20, TOMM22, TOMM40 and TOMM70).

It is found in the mitochondrion outer membrane. This is Mitochondrial import receptor subunit TOM6 homolog (Tomm6) from Mus musculus (Mouse).